The chain runs to 232 residues: Lipoprotein-releasing system ATP-binding protein LolD (232 aa).

Residues 11–232 (IEVTDLQRAF…LHDGRLIEEY (222 aa)) enclose the ABC transporter domain. 47-54 (GPSGAGKS) provides a ligand contact to ATP.

This sequence belongs to the ABC transporter superfamily. Lipoprotein translocase (TC 3.A.1.125) family. In terms of assembly, the complex is composed of two ATP-binding proteins (LolD) and two transmembrane proteins (LolC and LolE).

The protein resides in the cell inner membrane. In terms of biological role, part of the ABC transporter complex LolCDE involved in the translocation of mature outer membrane-directed lipoproteins, from the inner membrane to the periplasmic chaperone, LolA. Responsible for the formation of the LolA-lipoprotein complex in an ATP-dependent manner. The chain is Lipoprotein-releasing system ATP-binding protein LolD from Zymomonas mobilis subsp. mobilis (strain ATCC 10988 / DSM 424 / LMG 404 / NCIMB 8938 / NRRL B-806 / ZM1).